The following is a 304-amino-acid chain: Undecaprenyl-diphosphatase (304 aa).

A run of 8 helical transmembrane segments spans residues 5–25 (FLFI…EFVP), 47–67 (GFPE…VVVL), 72–92 (ISSS…LKTS), 111–131 (FGIN…LFHD), 137–157 (LFST…LIVI), 209–231 (ISGL…AMVG), 248–268 (TNWI…LVVI), and 283–303 (FAIY…TKVI).

This sequence belongs to the UppP family.

It is found in the cell membrane. It carries out the reaction di-trans,octa-cis-undecaprenyl diphosphate + H2O = di-trans,octa-cis-undecaprenyl phosphate + phosphate + H(+). Functionally, catalyzes the dephosphorylation of undecaprenyl diphosphate (UPP). Confers resistance to bacitracin. This is Undecaprenyl-diphosphatase from Clostridium perfringens (strain 13 / Type A).